Consider the following 201-residue polypeptide: Large ribosomal subunit protein uL4 (201 aa).

The segment at 46–71 (QKTRAEVVGSGKKPWRQKGTGRARAG) is disordered.

This sequence belongs to the universal ribosomal protein uL4 family. Part of the 50S ribosomal subunit.

One of the primary rRNA binding proteins, this protein initially binds near the 5'-end of the 23S rRNA. It is important during the early stages of 50S assembly. It makes multiple contacts with different domains of the 23S rRNA in the assembled 50S subunit and ribosome. In terms of biological role, forms part of the polypeptide exit tunnel. This is Large ribosomal subunit protein uL4 from Shewanella woodyi (strain ATCC 51908 / MS32).